Reading from the N-terminus, the 578-residue chain is Translation initiation factor eIF2B subunit gamma (578 aa).

Residues Ser296 and Ser300 each carry the phosphoserine modification. Disordered regions lie at residues 298 to 337 (QASF…SATS) and 535 to 578 (DDSV…LFER). Residue Thr306 is modified to Phosphothreonine. The span at 544 to 578 (EIAEETDSDDRSDEDSDDSEYTDEYEYEDDGLFER) shows a compositional bias: acidic residues.

This sequence belongs to the eIF-2B gamma/epsilon subunits family. As to quaternary structure, component of the translation initiation factor 2B (eIF2B) complex which is a heterodecamer of two sets of five different subunits: alpha, beta, gamma, delta and epsilon. Subunits alpha, beta and delta comprise a regulatory subcomplex and subunits epsilon and gamma comprise a catalytic subcomplex. Within the complex, the hexameric regulatory complex resides at the center, with the two heterodimeric catalytic subcomplexes bound on opposite sides.

It is found in the cytoplasm. The protein resides in the cytosol. Its function is as follows. Acts as a component of the translation initiation factor 2B (eIF2B) complex, which catalyzes the exchange of GDP for GTP on the eukaryotic initiation factor 2 (eIF2) complex gamma subunit. Its guanine nucleotide exchange factor activity is repressed when bound to eIF2 complex phosphorylated on the alpha subunit, thereby limiting the amount of methionyl-initiator methionine tRNA available to the ribosome and consequently global translation is repressed. It activates the synthesis of GCN4 in yeast under amino acid starvation conditions by suppressing the inhibitory effects of multiple AUG codons present in the leader of GCN4 mRNA. It may promote either repression or activation of GCN4 expression depending on amino acid availability. GCD1 stabilizes the interaction between eIF2 and GCD6 and stimulates the catalytic activity in vitro. The sequence is that of Translation initiation factor eIF2B subunit gamma (GCD1) from Saccharomyces cerevisiae (strain ATCC 204508 / S288c) (Baker's yeast).